A 242-amino-acid chain; its full sequence is 3-deoxy-manno-octulosonate cytidylyltransferase (242 aa).

It belongs to the KdsB family.

It localises to the cytoplasm. It carries out the reaction 3-deoxy-alpha-D-manno-oct-2-ulosonate + CTP = CMP-3-deoxy-beta-D-manno-octulosonate + diphosphate. It functions in the pathway nucleotide-sugar biosynthesis; CMP-3-deoxy-D-manno-octulosonate biosynthesis; CMP-3-deoxy-D-manno-octulosonate from 3-deoxy-D-manno-octulosonate and CTP: step 1/1. It participates in bacterial outer membrane biogenesis; lipopolysaccharide biosynthesis. Its function is as follows. Activates KDO (a required 8-carbon sugar) for incorporation into bacterial lipopolysaccharide in Gram-negative bacteria. This is 3-deoxy-manno-octulosonate cytidylyltransferase from Anaeromyxobacter dehalogenans (strain 2CP-1 / ATCC BAA-258).